Consider the following 50-residue polypeptide: MPQKYRLLSLIVICFTLLFFTWMIRDSLCELHIKQESYELAAFLACKLKE.

A helical transmembrane segment spans residues 7–24 (LLSLIVICFTLLFFTWMI).

The protein belongs to the Hok/Gef family.

Its subcellular location is the cell inner membrane. In terms of biological role, toxic component of a type I toxin-antitoxin (TA) system. When overexpressed kills cells within minutes; causes collapse of the transmembrane potential and arrest of respiration. Its toxic effect is probably neutralized by antisense antitoxin RNA SokA. The sequence is that of Protein HokA from Escherichia coli (strain K12).